The sequence spans 201 residues: 3-isopropylmalate dehydratase small subunit (201 aa).

The protein belongs to the LeuD family. LeuD type 1 subfamily. In terms of assembly, heterodimer of LeuC and LeuD.

It catalyses the reaction (2R,3S)-3-isopropylmalate = (2S)-2-isopropylmalate. It participates in amino-acid biosynthesis; L-leucine biosynthesis; L-leucine from 3-methyl-2-oxobutanoate: step 2/4. Its function is as follows. Catalyzes the isomerization between 2-isopropylmalate and 3-isopropylmalate, via the formation of 2-isopropylmaleate. This Cronobacter sakazakii (strain ATCC BAA-894) (Enterobacter sakazakii) protein is 3-isopropylmalate dehydratase small subunit.